We begin with the raw amino-acid sequence, 359 residues long: Ferredoxin--NADP reductase (359 aa).

Positions 48, 56, 61, 101, 139, 304, and 345 each coordinate FAD. The tract at residues 340–359 (VHTHTSNDTNLQSRLHAAAE) is disordered. Residues 341–352 (HTHTSNDTNLQS) are compositionally biased toward polar residues.

The protein belongs to the ferredoxin--NADP reductase type 2 family. As to quaternary structure, homodimer. It depends on FAD as a cofactor.

It carries out the reaction 2 reduced [2Fe-2S]-[ferredoxin] + NADP(+) + H(+) = 2 oxidized [2Fe-2S]-[ferredoxin] + NADPH. The protein is Ferredoxin--NADP reductase of Ralstonia nicotianae (strain ATCC BAA-1114 / GMI1000) (Ralstonia solanacearum).